We begin with the raw amino-acid sequence, 671 residues long: DNA ligase (671 aa).

NAD(+) contacts are provided by residues 32-36 (DAEYD), 81-82 (SL), and E113. The active-site N6-AMP-lysine intermediate is the K115. Positions 136, 173, 290, and 314 each coordinate NAD(+). Zn(2+) contacts are provided by C408, C411, C426, and C432. The BRCT domain maps to 593 to 671 (EIDSPFAGKT…ETEMLRLLGS (79 aa)).

Belongs to the NAD-dependent DNA ligase family. LigA subfamily. Requires Mg(2+) as cofactor. The cofactor is Mn(2+).

It catalyses the reaction NAD(+) + (deoxyribonucleotide)n-3'-hydroxyl + 5'-phospho-(deoxyribonucleotide)m = (deoxyribonucleotide)n+m + AMP + beta-nicotinamide D-nucleotide.. Functionally, DNA ligase that catalyzes the formation of phosphodiester linkages between 5'-phosphoryl and 3'-hydroxyl groups in double-stranded DNA using NAD as a coenzyme and as the energy source for the reaction. It is essential for DNA replication and repair of damaged DNA. The chain is DNA ligase from Escherichia coli O127:H6 (strain E2348/69 / EPEC).